We begin with the raw amino-acid sequence, 185 residues long: Small ribosomal subunit protein uS5 (185 aa).

The S5 DRBM domain occupies 18-81; that stretch reads FVDKLVHINR…ESAKRALIRV (64 aa). The interval 157-185 is disordered; that stretch reads SPRSVAARRGIKVSQLQSRRRVEDAEATD. Basic and acidic residues predominate over residues 176–185; the sequence is RRVEDAEATD.

The protein belongs to the universal ribosomal protein uS5 family. Part of the 30S ribosomal subunit. Contacts proteins S4 and S8.

In terms of biological role, with S4 and S12 plays an important role in translational accuracy. Its function is as follows. Located at the back of the 30S subunit body where it stabilizes the conformation of the head with respect to the body. The chain is Small ribosomal subunit protein uS5 from Xanthobacter autotrophicus (strain ATCC BAA-1158 / Py2).